The sequence spans 485 residues: Glutamyl-tRNA(Gln) amidotransferase subunit A (485 aa).

Catalysis depends on charge relay system residues K78 and S153. Residue S177 is the Acyl-ester intermediate of the active site.

The protein belongs to the amidase family. GatA subfamily. As to quaternary structure, heterotrimer of A, B and C subunits.

The catalysed reaction is L-glutamyl-tRNA(Gln) + L-glutamine + ATP + H2O = L-glutaminyl-tRNA(Gln) + L-glutamate + ADP + phosphate + H(+). Its function is as follows. Allows the formation of correctly charged Gln-tRNA(Gln) through the transamidation of misacylated Glu-tRNA(Gln) in organisms which lack glutaminyl-tRNA synthetase. The reaction takes place in the presence of glutamine and ATP through an activated gamma-phospho-Glu-tRNA(Gln). This chain is Glutamyl-tRNA(Gln) amidotransferase subunit A, found in Bacillus cereus (strain Q1).